Reading from the N-terminus, the 129-residue chain is GEL complex subunit OPTI (129 aa).

Residues Met-1–Val-44 lie on the Cytoplasmic side of the membrane. A helical transmembrane segment spans residues Ile-45–Leu-65. Arg-66 is a topological domain (lumenal). A helical membrane pass occupies residues Gly-67 to Leu-84. The Cytoplasmic segment spans residues Tyr-85–Leu-103. Residues Thr-104–His-127 traverse the membrane as a helical segment. The Lumenal portion of the chain corresponds to Tyr-128–Asp-129.

The protein belongs to the EMC6 family. Component of the GET- and EMC-like (GEL) complex, composed of RAB5IF/OPTI and TMCO1. The GEL complex is part of the multi-pass translocon (MPT) complex, composed of three subcomplexes, the GEL complex (composed of RAB5IF/OPTI and TMCO1), the BOS complex (composed of NCLN/Nicalin, NOMO1 and TMEM147) and the PAT complex (composed of WDR83OS/Asterix and CCDC47). The MPT complex associates with the SEC61 complex. Interacts with NDUFS3, NDUFA4, NDUFV1, NDUFA9 and NDUFS8 of the mitochondrial membrane respiratory chain NADH dehydrogenase (Complex I). Interacts with UQCRC2 of the ubiquinol-cytochrome c reductase complex (Complex III). Interacts with COX5A and COX7C of the cytochrome c oxidase complex (Complex IV). As to expression, expressed in neuronal cells.

The protein resides in the endoplasmic reticulum membrane. It localises to the mitochondrion inner membrane. Functionally, component of the multi-pass translocon (MPT) complex that mediates insertion of multi-pass membrane proteins into the lipid bilayer of membranes. The MPT complex takes over after the SEC61 complex: following membrane insertion of the first few transmembrane segments of proteins by the SEC61 complex, the MPT complex occludes the lateral gate of the SEC61 complex to promote insertion of subsequent transmembrane regions. Within the MPT complex, the GEL subcomplex may mediate insertion of transmembrane regions into the membrane. In addition to its role in multi-pass membrane insertion, RAB5IF/OPTI also acts as an assembly factor for mitochondrial respiratory complexes. In Mus musculus (Mouse), this protein is GEL complex subunit OPTI.